A 129-amino-acid polypeptide reads, in one-letter code: Lysozyme C (129 aa).

Residues 1–129 (KVYGRCELAA…VSVWTRGCRL (129 aa)) enclose the C-type lysozyme domain. Cystine bridges form between Cys-6-Cys-127, Cys-30-Cys-115, Cys-64-Cys-80, and Cys-76-Cys-94. Catalysis depends on residues Glu-35 and Asp-52.

This sequence belongs to the glycosyl hydrolase 22 family. Monomer.

Its subcellular location is the secreted. It carries out the reaction Hydrolysis of (1-&gt;4)-beta-linkages between N-acetylmuramic acid and N-acetyl-D-glucosamine residues in a peptidoglycan and between N-acetyl-D-glucosamine residues in chitodextrins.. Its function is as follows. Lysozymes have primarily a bacteriolytic function; those in tissues and body fluids are associated with the monocyte-macrophage system and enhance the activity of immunoagents. In Lophura leucomelanos (Kalij pheasant), this protein is Lysozyme C (LYZ).